A 264-amino-acid chain; its full sequence is AA9 family lytic polysaccharide monooxygenase A (264 aa).

A signal peptide spans 1–18 (MHFAALAILSSLVASAAA). Residue His19 coordinates Cu(2+). N-linked (GlcNAc...) asparagine glycosylation is found at Asn51 and Asn75. Residues Cys59 and Cys182 are joined by a disulfide bond. Residue His96 coordinates Cu(2+). Asn110 carries N-linked (GlcNAc...) asparagine glycosylation. His162 lines the O2 pocket. Tyr179 is a binding site for Cu(2+). Residues Asn218 and Asn251 are each glycosylated (N-linked (GlcNAc...) asparagine).

This sequence belongs to the polysaccharide monooxygenase AA9 family. Cu(2+) is required as a cofactor.

Its subcellular location is the secreted. It catalyses the reaction [(1-&gt;4)-beta-D-glucosyl]n+m + reduced acceptor + O2 = 4-dehydro-beta-D-glucosyl-[(1-&gt;4)-beta-D-glucosyl]n-1 + [(1-&gt;4)-beta-D-glucosyl]m + acceptor + H2O.. Its function is as follows. Lytic polysaccharide monooxygenase (LPMO) that depolymerizes crystalline and amorphous polysaccharides via the oxidation of scissile alpha- or beta-(1-4)-glycosidic bonds, yielding C4 oxidation products. Catalysis by LPMOs requires the reduction of the active-site copper from Cu(II) to Cu(I) by a reducing agent and H(2)O(2) or O(2) as a cosubstrate. Active on cellulose and cello-oligosaccharides, as well as plant cell wall-derived hemicellulosic polysaccharides. Also active on cello-oligosaccharides such as cellohexaose, cellopentaose or cellotetraose. In Phanerochaete carnosa (strain HHB-10118-sp) (White-rot fungus), this protein is AA9 family lytic polysaccharide monooxygenase A.